Consider the following 206-residue polypeptide: Guanylate kinase (206 aa).

Residues phenylalanine 5–lysine 183 enclose the Guanylate kinase-like domain. Glycine 12–serine 19 lines the ATP pocket.

This sequence belongs to the guanylate kinase family.

Its subcellular location is the cytoplasm. It carries out the reaction GMP + ATP = GDP + ADP. Its function is as follows. Essential for recycling GMP and indirectly, cGMP. This Helicobacter pylori (strain HPAG1) protein is Guanylate kinase.